We begin with the raw amino-acid sequence, 381 residues long: Flagellar P-ring protein (381 aa).

The first 33 residues, 1 to 33 (MQFFNTLHPTRPHWLLAALCLIASLLGAGTAQA), serve as a signal peptide directing secretion.

Belongs to the FlgI family. The basal body constitutes a major portion of the flagellar organelle and consists of four rings (L,P,S, and M) mounted on a central rod.

The protein resides in the periplasm. It localises to the bacterial flagellum basal body. Its function is as follows. Assembles around the rod to form the L-ring and probably protects the motor/basal body from shearing forces during rotation. The sequence is that of Flagellar P-ring protein from Albidiferax ferrireducens (strain ATCC BAA-621 / DSM 15236 / T118) (Rhodoferax ferrireducens).